The chain runs to 191 residues: UPF0228 protein MM_1428 (191 aa).

Belongs to the UPF0228 family.

The protein is UPF0228 protein MM_1428 of Methanosarcina mazei (strain ATCC BAA-159 / DSM 3647 / Goe1 / Go1 / JCM 11833 / OCM 88) (Methanosarcina frisia).